Reading from the N-terminus, the 73-residue chain is ATP synthase subunit c (73 aa).

2 helical membrane passes run 4–24 and 51–71; these read LAIG…GIGI and GALA…IIIF.

It belongs to the ATPase C chain family. As to quaternary structure, F-type ATPases have 2 components, F(1) - the catalytic core - and F(0) - the membrane proton channel. F(1) has five subunits: alpha(3), beta(3), gamma(1), delta(1), epsilon(1). F(0) has three main subunits: a(1), b(2) and c(10-14). The alpha and beta chains form an alternating ring which encloses part of the gamma chain. F(1) is attached to F(0) by a central stalk formed by the gamma and epsilon chains, while a peripheral stalk is formed by the delta and b chains.

The protein localises to the cell membrane. Its function is as follows. F(1)F(0) ATP synthase produces ATP from ADP in the presence of a proton or sodium gradient. F-type ATPases consist of two structural domains, F(1) containing the extramembraneous catalytic core and F(0) containing the membrane proton channel, linked together by a central stalk and a peripheral stalk. During catalysis, ATP synthesis in the catalytic domain of F(1) is coupled via a rotary mechanism of the central stalk subunits to proton translocation. Key component of the F(0) channel; it plays a direct role in translocation across the membrane. A homomeric c-ring of between 10-14 subunits forms the central stalk rotor element with the F(1) delta and epsilon subunits. This is ATP synthase subunit c from Caldanaerobacter subterraneus subsp. tengcongensis (strain DSM 15242 / JCM 11007 / NBRC 100824 / MB4) (Thermoanaerobacter tengcongensis).